The primary structure comprises 249 residues: Proteasome activator complex subunit 1 (249 aa).

Positions 55-102 are disordered; that stretch reads SNLKAPLDIPVPDPVKEKEKEERRKQQEKEDKDEKKKGEDEDKGPPCG. Positions 68 to 98 are enriched in basic and acidic residues; the sequence is PVKEKEKEERRKQQEKEDKDEKKKGEDEDKG.

Belongs to the PA28 family. In terms of assembly, heterodimer of PSME1 and PSME2, which forms a hexameric ring. PSME1 can form homoheptamers.

Its function is as follows. Implicated in immunoproteasome assembly and required for efficient antigen processing. The PA28 activator complex enhances the generation of class I binding peptides by altering the cleavage pattern of the proteasome. This chain is Proteasome activator complex subunit 1 (PSME1), found in Bos taurus (Bovine).